Here is a 126-residue protein sequence, read N- to C-terminus: Large ribosomal subunit protein bL12 (126 aa).

Belongs to the bacterial ribosomal protein bL12 family. In terms of assembly, homodimer. Part of the ribosomal stalk of the 50S ribosomal subunit. Forms a multimeric L10(L12)X complex, where L10 forms an elongated spine to which 2 to 4 L12 dimers bind in a sequential fashion. Binds GTP-bound translation factors.

In terms of biological role, forms part of the ribosomal stalk which helps the ribosome interact with GTP-bound translation factors. Is thus essential for accurate translation. This is Large ribosomal subunit protein bL12 from Methylobacterium sp. (strain 4-46).